We begin with the raw amino-acid sequence, 225 residues long: Octanoyltransferase (225 aa).

In terms of domain architecture, BPL/LPL catalytic spans 43 to 225 (GTAPELVWLL…KTFRDVFGRG (183 aa)). Residues 82-89 (RGGQYTYH), 157-159 (AIG), and 170-172 (GVS) each bind substrate. Cys188 serves as the catalytic Acyl-thioester intermediate.

It belongs to the LipB family.

The protein resides in the cytoplasm. The enzyme catalyses octanoyl-[ACP] + L-lysyl-[protein] = N(6)-octanoyl-L-lysyl-[protein] + holo-[ACP] + H(+). It participates in protein modification; protein lipoylation via endogenous pathway; protein N(6)-(lipoyl)lysine from octanoyl-[acyl-carrier-protein]: step 1/2. Catalyzes the transfer of endogenously produced octanoic acid from octanoyl-acyl-carrier-protein onto the lipoyl domains of lipoate-dependent enzymes. Lipoyl-ACP can also act as a substrate although octanoyl-ACP is likely to be the physiological substrate. This is Octanoyltransferase from Parvibaculum lavamentivorans (strain DS-1 / DSM 13023 / NCIMB 13966).